The primary structure comprises 113 residues: Replication initiation control protein YabA (113 aa).

Residues His88, Cys90, Cys104, and Cys107 each contribute to the Zn(2+) site.

This sequence belongs to the YabA family. Homotetramer. Interacts with both DnaA and DnaN, acting as a bridge between these two proteins. Requires Zn(2+) as cofactor.

It is found in the cytoplasm. The protein localises to the nucleoid. In terms of biological role, involved in control of chromosome replication initiation. Inhibits the cooperative binding of DnaA to the oriC region, thus negatively regulating initiation of chromosome replication. Inhibits the ability of DnaA-ATP to form a helix on DNA; does not disassemble preformed DnaA-DNA helices. Decreases the residence time of DnaA on the chromosome at its binding sites (oriC, replication forks and promoter-binding sites). Tethers DnaA to the replication machinery via the DNA polymerase beta sliding clamp subunit (dnaN). Associates with oriC and other DnaA targets on the chromosome in a DnaA-dependent manner. This is Replication initiation control protein YabA from Staphylococcus saprophyticus subsp. saprophyticus (strain ATCC 15305 / DSM 20229 / NCIMB 8711 / NCTC 7292 / S-41).